We begin with the raw amino-acid sequence, 316 residues long: NAD kinase 1 (316 aa).

The Proton acceptor role is filled by aspartate 67. Aspartate 67–glycine 68 contributes to the NAD(+) binding site. Positions arginine 132 to aspartate 151 are disordered. NAD(+) is bound by residues asparagine 160 to aspartate 161, arginine 190, and aspartate 192.

Belongs to the NAD kinase family. The cofactor is a divalent metal cation.

It localises to the cytoplasm. The catalysed reaction is NAD(+) + ATP = ADP + NADP(+) + H(+). Involved in the regulation of the intracellular balance of NAD and NADP, and is a key enzyme in the biosynthesis of NADP. Catalyzes specifically the phosphorylation on 2'-hydroxyl of the adenosine moiety of NAD to yield NADP. This is NAD kinase 1 from Parasynechococcus marenigrum (strain WH8102).